A 64-amino-acid chain; its full sequence is Alpha-conotoxin CnIA (64 aa).

The N-terminal stretch at 1 to 21 (MGMRMMFTVFLLVVLTTTVVS) is a signal peptide. The propeptide occupies 22 to 47 (FPSDSASDGRDDEAKDERSDIYESKR). 2 cysteine pairs are disulfide-bonded: C51–C56 and C52–C62. Position 54 is a 4-hydroxyproline; in CnIK; partial (P54). Residue C62 is modified to Cysteine amide.

Belongs to the conotoxin A superfamily. Expressed by the venom duct.

Its subcellular location is the secreted. Alpha-conotoxins act on postsynaptic membranes, they bind to the nicotinic acetylcholine receptors (nAChR) and thus inhibit them. CnIA and CnIB block muscular nAChR alpha-1/gamma and alpha-1/delta subunits. This is Alpha-conotoxin CnIA from Conus consors (Singed cone).